The following is a 221-amino-acid chain: Octanoyltransferase (221 aa).

Residues 31–213 form the BPL/LPL catalytic domain; that stretch reads DKSADEIWLV…HFVTILGYNK (183 aa). Residues 70-77, 142-144, and 155-157 contribute to the substrate site; these read RGGQITYH, SLG, and GLA. C173 serves as the catalytic Acyl-thioester intermediate.

This sequence belongs to the LipB family.

The protein resides in the cytoplasm. The catalysed reaction is octanoyl-[ACP] + L-lysyl-[protein] = N(6)-octanoyl-L-lysyl-[protein] + holo-[ACP] + H(+). The protein operates within protein modification; protein lipoylation via endogenous pathway; protein N(6)-(lipoyl)lysine from octanoyl-[acyl-carrier-protein]: step 1/2. Functionally, catalyzes the transfer of endogenously produced octanoic acid from octanoyl-acyl-carrier-protein onto the lipoyl domains of lipoate-dependent enzymes. Lipoyl-ACP can also act as a substrate although octanoyl-ACP is likely to be the physiological substrate. This Mannheimia succiniciproducens (strain KCTC 0769BP / MBEL55E) protein is Octanoyltransferase.